Reading from the N-terminus, the 305-residue chain is MIKQRTLKRIVQATGVGLHTGKKVTLTLRPASANTGVIYRRTDLNPPVDFPADAKSVRDTMLCTCLVNEHDVRISTVEHLNAALAGLGIDNIIVEVDAPEIPIMDGSASPFVYLLLDAGIEELNSAKKFLRLKQAVRVEDGDKWAELAPYNGFTLDFTIDFKHPAIDASSQRYFLNFSAESFVRQISRARTFGFMRDIEYLQSRGLALGGSFDCAIVVDDYRVLNEDGLRFEDEFVRHKMLDAIGDLFMFGHNIIGAFTAFKSGHAMNNKLLQAVLARQEAWELVTFEDEAKLPLAFKAPSFVMV.

Residues His79, His238, and Asp242 each coordinate Zn(2+). His265 acts as the Proton donor in catalysis.

It belongs to the LpxC family. Requires Zn(2+) as cofactor.

It carries out the reaction a UDP-3-O-[(3R)-3-hydroxyacyl]-N-acetyl-alpha-D-glucosamine + H2O = a UDP-3-O-[(3R)-3-hydroxyacyl]-alpha-D-glucosamine + acetate. The protein operates within glycolipid biosynthesis; lipid IV(A) biosynthesis; lipid IV(A) from (3R)-3-hydroxytetradecanoyl-[acyl-carrier-protein] and UDP-N-acetyl-alpha-D-glucosamine: step 2/6. Its function is as follows. Catalyzes the hydrolysis of UDP-3-O-myristoyl-N-acetylglucosamine to form UDP-3-O-myristoylglucosamine and acetate, the committed step in lipid A biosynthesis. This chain is UDP-3-O-acyl-N-acetylglucosamine deacetylase, found in Sodalis glossinidius (strain morsitans).